Reading from the N-terminus, the 130-residue chain is Small ribosomal subunit protein uS8 (130 aa).

The protein belongs to the universal ribosomal protein uS8 family. In terms of assembly, part of the 30S ribosomal subunit. Contacts proteins S5 and S12.

In terms of biological role, one of the primary rRNA binding proteins, it binds directly to 16S rRNA central domain where it helps coordinate assembly of the platform of the 30S subunit. This chain is Small ribosomal subunit protein uS8, found in Cytophaga hutchinsonii (strain ATCC 33406 / DSM 1761 / CIP 103989 / NBRC 15051 / NCIMB 9469 / D465).